We begin with the raw amino-acid sequence, 534 residues long: ATP synthase subunit beta 2 (534 aa).

Residue 185-192 coordinates ATP; sequence GGAGVGKT. Positions 494 to 505 are enriched in basic and acidic residues; that stretch reads AAAREADARREA. The interval 494-534 is disordered; that stretch reads AAAREADARREAAAAASGAGPGTTSDPASGSAEPQGARHGR.

The protein belongs to the ATPase alpha/beta chains family. F-type ATPases have 2 components, CF(1) - the catalytic core - and CF(0) - the membrane proton channel. CF(1) has five subunits: alpha(3), beta(3), gamma(1), delta(1), epsilon(1). CF(0) has three main subunits: a(1), b(2) and c(9-12). The alpha and beta chains form an alternating ring which encloses part of the gamma chain. CF(1) is attached to CF(0) by a central stalk formed by the gamma and epsilon chains, while a peripheral stalk is formed by the delta and b chains.

It localises to the cell inner membrane. It carries out the reaction ATP + H2O + 4 H(+)(in) = ADP + phosphate + 5 H(+)(out). Functionally, produces ATP from ADP in the presence of a proton gradient across the membrane. The catalytic sites are hosted primarily by the beta subunits. The polypeptide is ATP synthase subunit beta 2 (Burkholderia mallei (strain NCTC 10247)).